The sequence spans 473 residues: Ribulose bisphosphate carboxylase large chain (473 aa).

Substrate is bound by residues N116 and T166. K168 serves as the catalytic Proton acceptor. Position 170 (K170) interacts with substrate. Mg(2+)-binding residues include K194, D196, and E197. K194 carries the N6-carboxylysine modification. The active-site Proton acceptor is the H287. The substrate site is built by R288, H320, and S372.

Belongs to the RuBisCO large chain family. Type I subfamily. Heterohexadecamer of 8 large chains and 8 small chains. Requires Mg(2+) as cofactor.

It catalyses the reaction 2 (2R)-3-phosphoglycerate + 2 H(+) = D-ribulose 1,5-bisphosphate + CO2 + H2O. It carries out the reaction D-ribulose 1,5-bisphosphate + O2 = 2-phosphoglycolate + (2R)-3-phosphoglycerate + 2 H(+). Its function is as follows. RuBisCO catalyzes two reactions: the carboxylation of D-ribulose 1,5-bisphosphate, the primary event in carbon dioxide fixation, as well as the oxidative fragmentation of the pentose substrate. Both reactions occur simultaneously and in competition at the same active site. The protein is Ribulose bisphosphate carboxylase large chain of Nitrobacter winogradskyi (Nitrobacter agilis).